We begin with the raw amino-acid sequence, 370 residues long: Myomodulin neuropeptides 1 (370 aa).

Positions 1–18 (MQVYMLLPLAVFASLTYQ) are cleaved as a signal peptide. The propeptide occupies 19 to 50 (GACEETAAAQTSSDASTSSASSEHAENELSRA). Positions 28 to 40 (QTSSDASTSSASS) are enriched in low complexity. Residues 28–52 (QTSSDASTSSASSEHAENELSRAKR) are disordered. A leucine amide mark is found at Leu-60 and Leu-69. Positions 73-190 (GGPVEPESEE…EPEEGGLGEE (118 aa)) are excised as a propeptide. Residues Leu-199 and Leu-209 each carry the leucine amide modification. A compositionally biased stretch (basic and acidic residues) spans 210-226 (GKREGEEGDEMDKKQDE). The disordered stretch occupies residues 210–230 (GKREGEEGDEMDKKQDESLND). Positions 213–237 (EGEEGDEMDKKQDESLNDDFENDDI) are excised as a propeptide. A leucine amide mark is found at Leu-246, Leu-256, Leu-266, Leu-276, Leu-286, Leu-296, Leu-306, Leu-316, Leu-326, Leu-336, and Leu-346. The disordered stretch occupies residues 344-370 (LRLGKRDDDEKEKKSLNMSRLGKRSTQ). Residues 347-358 (GKRDDDEKEKKS) show a composition bias toward basic and acidic residues. A propeptide spanning residues 350–355 (DDDEKE) is cleaved from the precursor. At Leu-364 the chain carries Leucine amide. Positions 368–370 (STQ) are excised as a propeptide.

In terms of tissue distribution, expressed in all ganglia of the CNS, but only in a subset of neurons including L10 in the abdominal ganglion and B16 in the buccal ganglion.

Its subcellular location is the secreted. In terms of biological role, exogenous application of myomodulins potentiates ARC muscle contraction. This is Myomodulin neuropeptides 1 (MYOMOD1) from Aplysia californica (California sea hare).